A 491-amino-acid polypeptide reads, in one-letter code: Aspartyl/glutamyl-tRNA(Asn/Gln) amidotransferase subunit B (491 aa).

The protein belongs to the GatB/GatE family. GatB subfamily. Heterotrimer of A, B and C subunits.

It catalyses the reaction L-glutamyl-tRNA(Gln) + L-glutamine + ATP + H2O = L-glutaminyl-tRNA(Gln) + L-glutamate + ADP + phosphate + H(+). It carries out the reaction L-aspartyl-tRNA(Asn) + L-glutamine + ATP + H2O = L-asparaginyl-tRNA(Asn) + L-glutamate + ADP + phosphate + 2 H(+). Allows the formation of correctly charged Asn-tRNA(Asn) or Gln-tRNA(Gln) through the transamidation of misacylated Asp-tRNA(Asn) or Glu-tRNA(Gln) in organisms which lack either or both of asparaginyl-tRNA or glutaminyl-tRNA synthetases. The reaction takes place in the presence of glutamine and ATP through an activated phospho-Asp-tRNA(Asn) or phospho-Glu-tRNA(Gln). The polypeptide is Aspartyl/glutamyl-tRNA(Asn/Gln) amidotransferase subunit B (Burkholderia cenocepacia (strain HI2424)).